A 230-amino-acid polypeptide reads, in one-letter code: Ribosomal RNA small subunit methyltransferase I (230 aa).

It belongs to the methyltransferase superfamily. RsmI family.

Its subcellular location is the cytoplasm. It carries out the reaction cytidine(1402) in 16S rRNA + S-adenosyl-L-methionine = 2'-O-methylcytidine(1402) in 16S rRNA + S-adenosyl-L-homocysteine + H(+). Functionally, catalyzes the 2'-O-methylation of the ribose of cytidine 1402 (C1402) in 16S rRNA. The protein is Ribosomal RNA small subunit methyltransferase I of Hydrogenobaculum sp. (strain Y04AAS1).